A 151-amino-acid polypeptide reads, in one-letter code: Desiccation-related protein PCC27-45 (151 aa).

This sequence belongs to the LEA type 2 family.

The polypeptide is Desiccation-related protein PCC27-45 (Craterostigma plantagineum (Blue gem)).